Here is a 266-residue protein sequence, read N- to C-terminus: Short-chain dehydrogenase/reductase tropE (266 aa).

The NADP(+) site is built by leucine 18, aspartate 69, and asparagine 96. Serine 147 acts as the Proton donor in catalysis. Tyrosine 181, lysine 185, and threonine 216 together coordinate NADP(+). The Proton acceptor role is filled by tyrosine 181. The active-site Lowers pKa of active site Tyr is the lysine 185.

Belongs to the short-chain dehydrogenases/reductases (SDR) family.

It participates in secondary metabolite biosynthesis. In terms of biological role, short-chain dehydrogenase/reductase; part of the gene cluster that mediates the biosynthesis of the tropolone class of fungal maleic anhydrides. The pathway begins with the synthesis of 3-methylorcinaldehyde by the non-reducing polyketide synthase (PKS) tropA. 3-methylorcinaldehyde is the substrate for the FAD-dependent monooxygenase tropB to yield a dearomatized hydroxycyclohexadione. The 2-oxoglutarate-dependent dioxygenase tropC then performs the oxidative ring expansion to provide the first tropolone metabolite stipitaldehyde. Trop D converts stipitaldehyde into stipitacetal which is in turn converted to stipitalide by the short-chain dehydrogenase/reductase tropE. The next steps involve tropF, tropG, tropH, tropI and tropJ to form successive tropolone maleic anhydrides including stipitaldehydic, stipitatonic and stipitatic acids. The protein is Short-chain dehydrogenase/reductase tropE of Talaromyces stipitatus (strain ATCC 10500 / CBS 375.48 / QM 6759 / NRRL 1006) (Penicillium stipitatum).